Consider the following 184-residue polypeptide: Photosystem I assembly protein Ycf4 (184 aa).

2 helical membrane-spanning segments follow: residues Asn21 to Tyr43 and Leu58 to Ser78.

It belongs to the Ycf4 family.

Its subcellular location is the plastid. It localises to the chloroplast thylakoid membrane. Its function is as follows. Seems to be required for the assembly of the photosystem I complex. The protein is Photosystem I assembly protein Ycf4 of Pinus thunbergii (Japanese black pine).